The chain runs to 90 residues: YcgL domain-containing protein Spro_2755 (90 aa).

The region spanning 1–85 (MLCVIYRSSK…PLENLLKQHL (85 aa)) is the YcgL domain.

The polypeptide is YcgL domain-containing protein Spro_2755 (Serratia proteamaculans (strain 568)).